The following is a 234-amino-acid chain: Glucosamine-6-phosphate deaminase (234 aa).

Residue Asp62 is the Proton acceptor; for enolization step of the active site. Asn128 (for ring-opening step) is an active-site residue. Residue His130 is the Proton acceptor; for ring-opening step of the active site. The active-site For ring-opening step is the Glu135.

This sequence belongs to the glucosamine/galactosamine-6-phosphate isomerase family. NagB subfamily.

It carries out the reaction alpha-D-glucosamine 6-phosphate + H2O = beta-D-fructose 6-phosphate + NH4(+). The protein operates within amino-sugar metabolism; N-acetylneuraminate degradation; D-fructose 6-phosphate from N-acetylneuraminate: step 5/5. In terms of biological role, catalyzes the reversible isomerization-deamination of glucosamine 6-phosphate (GlcN6P) to form fructose 6-phosphate (Fru6P) and ammonium ion. This is Glucosamine-6-phosphate deaminase from Streptococcus equi subsp. zooepidemicus (strain H70).